The chain runs to 348 residues: UDP-glucose 4-epimerase (348 aa).

NAD(+)-binding positions include 12-14 (GYI), 33-37 (DNFHN), 66-67 (DI), Phe-88, and Lys-92. 132–134 (SAT) lines the substrate pocket. Tyr-157 functions as the Proton acceptor in the catalytic mechanism. Lys-161 and Tyr-185 together coordinate NAD(+). Substrate contacts are provided by residues 185 to 187 (YFN), 206 to 208 (NNL), 224 to 226 (NVF), Arg-239, and 300 to 303 (REGD).

The protein belongs to the NAD(P)-dependent epimerase/dehydratase family. Homodimer. The cofactor is NAD(+).

The catalysed reaction is UDP-alpha-D-glucose = UDP-alpha-D-galactose. It catalyses the reaction UDP-N-acetyl-alpha-D-glucosamine = UDP-N-acetyl-alpha-D-galactosamine. The protein operates within carbohydrate metabolism; galactose metabolism. Catalyzes two distinct but analogous reactions: the reversible epimerization of UDP-glucose to UDP-galactose and the reversible epimerization of UDP-N-acetylglucosamine to UDP-N-acetylgalactosamine. The reaction with UDP-Gal plays a critical role in the Leloir pathway of galactose catabolism in which galactose is converted to the glycolytic intermediate glucose 6-phosphate. It contributes to the catabolism of dietary galactose and enables the endogenous biosynthesis of both UDP-Gal and UDP-GalNAc when exogenous sources are limited. Both UDP-sugar interconversions are important in the synthesis of glycoproteins and glycolipids. In Pongo abelii (Sumatran orangutan), this protein is UDP-glucose 4-epimerase (GALE).